Consider the following 257-residue polypeptide: Undecaprenyl-diphosphatase (257 aa).

7 helical membrane-spanning segments follow: residues 42-62 (YVLF…YMFL), 76-96 (IFHI…LKPI), 103-123 (PQYL…GVYF), 136-156 (CLTI…RSGA), 172-192 (IQFS…LEIW), 209-229 (QFLT…WAVI), and 237-257 (WVYF…YFQM).

Belongs to the UppP family.

The protein localises to the cell inner membrane. The enzyme catalyses di-trans,octa-cis-undecaprenyl diphosphate + H2O = di-trans,octa-cis-undecaprenyl phosphate + phosphate + H(+). Its function is as follows. Catalyzes the dephosphorylation of undecaprenyl diphosphate (UPP). Confers resistance to bacitracin. This chain is Undecaprenyl-diphosphatase, found in Protochlamydia amoebophila (strain UWE25).